Consider the following 142-residue polypeptide: Ribosome maturation factor RimP (142 aa).

This sequence belongs to the RimP family.

The protein resides in the cytoplasm. Required for maturation of 30S ribosomal subunits. The protein is Ribosome maturation factor RimP of Nitrosospira multiformis (strain ATCC 25196 / NCIMB 11849 / C 71).